The sequence spans 261 residues: Ribonuclease HII (261 aa).

The 189-residue stretch at 71-259 folds into the RNase H type-2 domain; the sequence is KYIAGVDEVG…VKEAKLHFDS (189 aa). The a divalent metal cation site is built by D77, E78, and D169.

This sequence belongs to the RNase HII family. It depends on Mn(2+) as a cofactor. Requires Mg(2+) as cofactor.

The protein resides in the cytoplasm. It catalyses the reaction Endonucleolytic cleavage to 5'-phosphomonoester.. In terms of biological role, endonuclease that specifically degrades the RNA of RNA-DNA hybrids. This is Ribonuclease HII from Listeria monocytogenes serotype 4b (strain F2365).